We begin with the raw amino-acid sequence, 101 residues long: Phosphoprotein OPG062 (101 aa).

The segment at 51–73 is disordered; that stretch reads PSSPACERRPSSPSRCERMNNPG. A phosphoserine mark is found at serine 53 and serine 62. Residues 56-68 are compositionally biased toward basic and acidic residues; sequence CERRPSSPSRCER.

It belongs to the orthopoxvirus OPG062 family. As to quaternary structure, self-associates to form high molecular-weight forms. Interacts with protein OPG157. Interacts with host RICTOR and RPTOR; these interactions disrupt the mTORC1 and mTORC2 crosstalk. Phosphorylated on two serines. While these phosphorylations do not play a role in virion assembly; they are essential for the interaction with host RICTOR and RPTOR.

It localises to the virion. Functionally, plays an essential role in virion assembly and morphogenesis. Also plays a role in the inhibition of host immune response by dysregulating mTOR. Sequesters host RICTOR and RPTOR, thereby disrupting mTORC1 and mTORC2 crosstalk. In turn, blocks the host antiviral response in part through mTOR-dependent degradation of cGAS, the primary poxvirus sensor. In Homo sapiens (Human), this protein is Phosphoprotein OPG062 (OPG062).